Here is a 473-residue protein sequence, read N- to C-terminus: 3-isopropylmalate dehydratase large subunit (473 aa).

Residues cysteine 351, cysteine 414, and cysteine 417 each contribute to the [4Fe-4S] cluster site.

This sequence belongs to the aconitase/IPM isomerase family. LeuC type 1 subfamily. Heterodimer of LeuC and LeuD. It depends on [4Fe-4S] cluster as a cofactor.

It catalyses the reaction (2R,3S)-3-isopropylmalate = (2S)-2-isopropylmalate. The protein operates within amino-acid biosynthesis; L-leucine biosynthesis; L-leucine from 3-methyl-2-oxobutanoate: step 2/4. Catalyzes the isomerization between 2-isopropylmalate and 3-isopropylmalate, via the formation of 2-isopropylmaleate. The protein is 3-isopropylmalate dehydratase large subunit of Variovorax paradoxus (strain S110).